Reading from the N-terminus, the 394-residue chain is Elongation factor Tu 2 (394 aa).

Residues 10 to 204 (KPHVNVGTIG…HLDTYIPEPE (195 aa)) enclose the tr-type G domain. Residues 19 to 26 (GHVDHGKT) are G1. 19 to 26 (GHVDHGKT) is a GTP binding site. Threonine 26 contributes to the Mg(2+) binding site. Residues 60 to 64 (GITIN) are G2. A G3 region spans residues 81 to 84 (DCPG). Residues 81–85 (DCPGH) and 136–139 (NKCD) each bind GTP. The G4 stretch occupies residues 136-139 (NKCD). The G5 stretch occupies residues 174–176 (SAL).

The protein belongs to the TRAFAC class translation factor GTPase superfamily. Classic translation factor GTPase family. EF-Tu/EF-1A subfamily. In terms of assembly, monomer.

It localises to the cytoplasm. It carries out the reaction GTP + H2O = GDP + phosphate + H(+). In terms of biological role, GTP hydrolase that promotes the GTP-dependent binding of aminoacyl-tRNA to the A-site of ribosomes during protein biosynthesis. The sequence is that of Elongation factor Tu 2 from Haemophilus influenzae (strain 86-028NP).